Reading from the N-terminus, the 347-residue chain is CCN family member 2 (347 aa).

The first 24 residues, 1–24 (MLASVAGPVSLALVLLLCTRPATG), serve as a signal peptide directing secretion. In terms of domain architecture, IGFBP N-terminal spans 25-96 (QDCSAQCQCA…NRKIGVCTAK (72 aa)). Intrachain disulfides connect cysteine 27–cysteine 52, cysteine 31–cysteine 54, cysteine 33–cysteine 55, cysteine 41–cysteine 58, cysteine 66–cysteine 80, and cysteine 72–cysteine 93. The region spanning 99–165 (APCVFGGSVY…GKCCEEWVCD (67 aa)) is the VWFC domain. Residues 196 to 241 (NCLVQTTEWSACSKTCGMGISTRVTNDNTFCRLEKQSRLCMVRPCE) form the TSP type-1 domain. The interval 245–347 (EENIKKGKKC…YYRKMYGDMA (103 aa)) is heparin-binding. 5 disulfides stabilise this stretch: cysteine 254-cysteine 291, cysteine 271-cysteine 305, cysteine 282-cysteine 321, cysteine 285-cysteine 323, and cysteine 290-cysteine 327. Residues 254–328 (CIRTPKIAKP…KTCACHYNCP (75 aa)) form the CTCK domain.

This sequence belongs to the CCN family. Monomer. Interacts with TSKU.

The protein resides in the secreted. The protein localises to the extracellular space. Its subcellular location is the extracellular matrix. Functionally, major connective tissue mitoattractant secreted by vascular endothelial cells. Promotes proliferation and differentiation of chondrocytes. Is involved in the stimulation of osteoblast differentiation and has a critical role in osteogenesis. Mediates heparin- and divalent cation-dependent cell adhesion in many cell types including fibroblasts, myofibroblasts, endothelial and epithelial cells. Enhances fibroblast growth factor-induced DNA synthesis. This chain is CCN family member 2, found in Rattus norvegicus (Rat).